Consider the following 349-residue polypeptide: UDP-N-acetylenolpyruvoylglucosamine reductase (349 aa).

The region spanning 25–197 (GIAARARFAA…VAVTFRLPKQ (173 aa)) is the FAD-binding PCMH-type domain. Residue Arg-173 is part of the active site. Ser-249 acts as the Proton donor in catalysis. Glu-345 is an active-site residue.

Belongs to the MurB family. Requires FAD as cofactor.

It localises to the cytoplasm. The catalysed reaction is UDP-N-acetyl-alpha-D-muramate + NADP(+) = UDP-N-acetyl-3-O-(1-carboxyvinyl)-alpha-D-glucosamine + NADPH + H(+). It participates in cell wall biogenesis; peptidoglycan biosynthesis. Functionally, cell wall formation. This Burkholderia orbicola (strain MC0-3) protein is UDP-N-acetylenolpyruvoylglucosamine reductase.